Here is a 291-residue protein sequence, read N- to C-terminus: Peptide methionine sulfoxide reductase MsrB/MsrA (291 aa).

A MsrB domain is found at 1-124 (MLANLQHLSD…NSAALRFVAR (124 aa)). Cysteine 113 (nucleophile) is an active-site residue. The tract at residues 127-284 (GTALFAAGCF…PGGYCHVSLH (158 aa)) is peptide methionine sulfoxide reductase A. Cysteine 135 is an active-site residue.

The protein in the N-terminal section; belongs to the MsrB Met sulfoxide reductase family. In the C-terminal section; belongs to the MsrA Met sulfoxide reductase family.

It carries out the reaction L-methionyl-[protein] + [thioredoxin]-disulfide + H2O = L-methionyl-(R)-S-oxide-[protein] + [thioredoxin]-dithiol. The catalysed reaction is L-methionyl-[protein] + [thioredoxin]-disulfide + H2O = L-methionyl-(S)-S-oxide-[protein] + [thioredoxin]-dithiol. The enzyme catalyses [thioredoxin]-disulfide + L-methionine + H2O = L-methionine (S)-S-oxide + [thioredoxin]-dithiol. Has an important function as a repair enzyme for proteins that have been inactivated by oxidation. Catalyzes the reversible oxidation-reduction of methionine sulfoxide in proteins to methionine. This is Peptide methionine sulfoxide reductase MsrB/MsrA (msrAB) from Treponema pallidum (strain Nichols).